The following is a 680-amino-acid chain: Probable potassium transport system protein Kup (680 aa).

The next 12 helical transmembrane spans lie at Ile16–Tyr36, Ile60–Leu80, Trp103–Pro123, Glu150–Thr170, Phe177–Met197, Val222–Ser242, Ser255–Leu275, Ile302–Gly322, Leu351–Phe371, Ala380–Leu400, Trp407–Ala427, and Phe432–Val452.

It belongs to the HAK/KUP transporter (TC 2.A.72) family.

It is found in the cell membrane. The enzyme catalyses K(+)(in) + H(+)(in) = K(+)(out) + H(+)(out). Functionally, transport of potassium into the cell. Likely operates as a K(+):H(+) symporter. The sequence is that of Probable potassium transport system protein Kup from Latilactobacillus sakei subsp. sakei (strain 23K) (Lactobacillus sakei subsp. sakei).